An 89-amino-acid chain; its full sequence is uncharacterized protein (89 aa).

Residue Met-1 is a topological domain, cytoplasmic. The helical transmembrane segment at 2-22 threads the bilayer; the sequence is LFEIIYIVSSLFYIVSIIYTL. Residues 23–89 are Extracellular-facing; it reads MRIKHINTVA…ELKKSKLCEG (67 aa).

It is found in the host membrane. This is an uncharacterized protein from Sulfolobus islandicus filamentous virus (isolate Iceland/Hveragerdi) (SIFV).